We begin with the raw amino-acid sequence, 442 residues long: Protein phosphatase 2C 3 (442 aa).

Residues 30-100 (RFRMSPSEMN…VSISDGNSSV (71 aa)) form a disordered region. Positions 79-90 (PEEESVSLEDSD) are enriched in acidic residues. One can recognise a PPM-type phosphatase domain in the interval 120–433 (RYGVASVCGR…DNVSVVVIDL (314 aa)). Mn(2+) contacts are provided by Asp-162, Gly-163, and Asp-339. The disordered stretch occupies residues 363–401 (GRGRRRGETQTPGRRSEEEGKEEEEKVVGSRKNGKRGEI). Over residues 376–390 (RRSEEEGKEEEEKVV) the composition is skewed to basic and acidic residues. Position 424 (Asp-424) interacts with Mn(2+).

The protein belongs to the PP2C family. In terms of assembly, part of a K(+)-channel calcium-sensing kinase/phosphatase complex composed by a calcium sensor CBL (CBL1, CBL2, CBL3 or CBL9), a kinase CIPK (CIPK6, CIPK16 or CIPK23), a phosphatase PP2C (AIP1) and a K(+)-channel (AKT1). Interacts with AKT1 and CIPK23. Interacts with PYL8/RCAR3 in an abscisic acid-independent. Interacts with PYR1/RCAR11 in an abscisic acid-dependent manner. Mg(2+) serves as cofactor. It depends on Mn(2+) as a cofactor. As to expression, expressed in shoot meristem, vascular tissues of cotyledons, and in primary roots surrounding the root meristem. Highly expressed in seeds.

The protein localises to the cell membrane. The protein resides in the cytoplasm. It is found in the nucleus. It catalyses the reaction O-phospho-L-seryl-[protein] + H2O = L-seryl-[protein] + phosphate. The catalysed reaction is O-phospho-L-threonyl-[protein] + H2O = L-threonyl-[protein] + phosphate. Its function is as follows. Involved in the negative regulation of the K(+) potassium channel AKT1 by its dephosphorylation, antagonistically to CIPK proteins (e.g. CIPK23). Functions as a positive regulator of abscisic acid-mediated cell signaling during seedling growth. Involved in the regulation of seed dormancy. Acts as a negative regulator of seed dormancy by inhibiting abscisic signaling and subsequently activating gibberellic acid signaling. This chain is Protein phosphatase 2C 3, found in Arabidopsis thaliana (Mouse-ear cress).